A 418-amino-acid polypeptide reads, in one-letter code: Actin-like protein C08B11.6 (418 aa).

The protein belongs to the actin family. ARP6 subfamily.

It is found in the cytoplasm. The protein resides in the cytoskeleton. The chain is Actin-like protein C08B11.6 (arp-6) from Caenorhabditis elegans.